A 301-amino-acid chain; its full sequence is MKGFSCSRPGYLTGLLLLAVAPILTACTRDYTTKNEFQLTTAQQAKLKPATIEYWRDGDTPEINYASEERRKEAEQKSKENAKKEDKKEEKKTEDSQDSSSASTQVRSSKHGLRIYGIDTPEKHVSSKGDSTGDEKIEAEKASNYAEKLIPKGSTVWVWSLNTYSYDREVGALFFKSNPKQTFFQSFEVAMVEAGHAIPIAGTGLNLIADPELSADDPLSVIGLQLANAANKAYNAKINIWSHDTDGYRSLTAVYKLRGADISWTRFLDEANGYSSASAGTGASLYQLWDQRQAKLAQKGS.

Residues Met-1–Ala-26 form the signal peptide. Cys-27 carries the N-palmitoyl cysteine lipid modification. Residue Cys-27 is the site of S-diacylglycerol cysteine attachment. The region spanning Lys-46–His-243 is the TNase-like domain. The tract at residues Asn-64–Lys-136 is disordered. Composition is skewed to basic and acidic residues over residues Ser-67–Asp-95 and Thr-120–Lys-136.

The protein resides in the cell membrane. This is an uncharacterized protein from Mycoplasma pneumoniae (strain ATCC 29342 / M129 / Subtype 1) (Mycoplasmoides pneumoniae).